Here is a 574-residue protein sequence, read N- to C-terminus: Serine carboxypeptidase ctsa-3.1 (574 aa).

The first 19 residues, 1-19 (MCRTLLGVAFLVVTVLSQG), serve as a signal peptide directing secretion. N-linked (GlcNAc...) asparagine glycans are attached at residues Asn48 and Asn163. Residue Ser172 is part of the active site. N-linked (GlcNAc...) asparagine glycans are attached at residues Asn241, Asn408, Asn414, and Asn426. Active-site residues include Asp441 and His507. Asn534 carries N-linked (GlcNAc...) asparagine glycosylation.

Belongs to the peptidase S10 family.

The protein is Serine carboxypeptidase ctsa-3.1 of Caenorhabditis elegans.